The primary structure comprises 511 residues: Kinesin-like protein 8 (511 aa).

The region spanning 5-356 (NVRVIVRVRP…LRYSEAARRI (352 aa)) is the Kinesin motor domain. 107–114 (GQKGTGKT) is an ATP binding site. 4 positions are modified to phosphoserine: Ser278, Ser279, Ser284, and Ser456. A coiled-coil region spans residues 373-489 (EGELDDILTT…KLVKSQLHDY (117 aa)).

It belongs to the TRAFAC class myosin-kinesin ATPase superfamily. Kinesin family.

The protein localises to the cytoplasm. Its subcellular location is the cytoskeleton. In Schizosaccharomyces pombe (strain 972 / ATCC 24843) (Fission yeast), this protein is Kinesin-like protein 8 (klp8).